We begin with the raw amino-acid sequence, 232 residues long: Chaperone protein CssC (232 aa).

A signal peptide spans M1–G20.

This sequence belongs to the periplasmic pilus chaperone family.

It is found in the periplasm. In terms of biological role, involved in the biogenesis of the CS6 fimbria. The chain is Chaperone protein CssC (cssC) from Escherichia coli.